Here is a 488-residue protein sequence, read N- to C-terminus: Acetyl-coenzyme A carboxylase carboxyl transferase subunit beta, chloroplastic (488 aa).

Positions 227-488 (LWIQCDNCYG…LHAFFPLNTN (262 aa)) constitute a CoA carboxyltransferase N-terminal domain. Residues C231, C234, C247, and C250 each contribute to the Zn(2+) site. The segment at 231-250 (CDNCYGLMYKKVKMNVCEQC) adopts a C4-type zinc-finger fold.

This sequence belongs to the AccD/PCCB family. In terms of assembly, acetyl-CoA carboxylase is a heterohexamer composed of biotin carboxyl carrier protein, biotin carboxylase and 2 subunits each of ACCase subunit alpha and ACCase plastid-coded subunit beta (accD). It depends on Zn(2+) as a cofactor. In terms of tissue distribution, accumulates in fatty acids synthesizing tissues such as embryos, expanding leaves, flower buds, flowers, and developing siliques.

The protein localises to the plastid. Its subcellular location is the chloroplast membrane. The protein resides in the chloroplast stroma. The catalysed reaction is N(6)-carboxybiotinyl-L-lysyl-[protein] + acetyl-CoA = N(6)-biotinyl-L-lysyl-[protein] + malonyl-CoA. It functions in the pathway lipid metabolism; malonyl-CoA biosynthesis; malonyl-CoA from acetyl-CoA: step 1/1. Its function is as follows. Component of the acetyl coenzyme A carboxylase (ACC) complex. Biotin carboxylase (BC) catalyzes the carboxylation of biotin on its carrier protein (BCCP) and then the CO(2) group is transferred by the transcarboxylase to acetyl-CoA to form malonyl-CoA. This is Acetyl-coenzyme A carboxylase carboxyl transferase subunit beta, chloroplastic from Arabidopsis thaliana (Mouse-ear cress).